Consider the following 86-residue polypeptide: Acyl carrier protein (86 aa).

The region spanning 7 to 85 is the Carrier domain; sequence SKVDNIEQKV…DVVNYIKEHK (79 aa). At serine 45 the chain carries O-(pantetheine 4'-phosphoryl)serine.

The protein belongs to the acyl carrier protein (ACP) family. 4'-phosphopantetheine is transferred from CoA to a specific serine of apo-ACP by AcpS. This modification is essential for activity because fatty acids are bound in thioester linkage to the sulfhydryl of the prosthetic group.

The protein localises to the cytoplasm. It participates in lipid metabolism; fatty acid biosynthesis. Functionally, carrier of the growing fatty acid chain in fatty acid biosynthesis. This chain is Acyl carrier protein, found in Rickettsia bellii (strain RML369-C).